Reading from the N-terminus, the 377-residue chain is Protein-arginine rhamnosyltransferase (377 aa).

DTDP-beta-L-rhamnose is bound at residue tyrosine 15. Aspartate 17 functions as the Proton acceptor in the catalytic mechanism. DTDP-beta-L-rhamnose contacts are provided by residues tyrosine 193, glutamine 255, and 271-275; that span reads RGEDS. Glutamate 273 is an active-site residue.

This sequence belongs to the glycosyltransferase 104 family.

It catalyses the reaction dTDP-beta-L-rhamnose + L-arginyl-[protein] = N(omega)-(alpha-L-rhamnosyl)-L-arginyl-[protein] + dTDP + H(+). Its function is as follows. Protein-arginine rhamnosyltransferase that catalyzes the transfer of a single rhamnose to elongation factor P (EF-P) on 'Lys-32', a modification required for EF-P-dependent rescue of polyproline stalled ribosomes. This chain is Protein-arginine rhamnosyltransferase, found in Pseudomonas putida (strain ATCC 47054 / DSM 6125 / CFBP 8728 / NCIMB 11950 / KT2440).